Here is a 302-residue protein sequence, read N- to C-terminus: Pantothenate synthetase (302 aa).

47 to 54 (MGALHEGH) contributes to the ATP binding site. His54 (proton donor) is an active-site residue. Gln79 is a binding site for (R)-pantoate. Gln79 provides a ligand contact to beta-alanine. 165–168 (GEKD) serves as a coordination point for ATP. Residue Gln171 participates in (R)-pantoate binding. ATP-binding positions include Val194 and 202-205 (LSSR).

Belongs to the pantothenate synthetase family. In terms of assembly, homodimer.

The protein resides in the cytoplasm. It carries out the reaction (R)-pantoate + beta-alanine + ATP = (R)-pantothenate + AMP + diphosphate + H(+). Its pathway is cofactor biosynthesis; (R)-pantothenate biosynthesis; (R)-pantothenate from (R)-pantoate and beta-alanine: step 1/1. In terms of biological role, catalyzes the condensation of pantoate with beta-alanine in an ATP-dependent reaction via a pantoyl-adenylate intermediate. The polypeptide is Pantothenate synthetase (Saccharopolyspora erythraea (strain ATCC 11635 / DSM 40517 / JCM 4748 / NBRC 13426 / NCIMB 8594 / NRRL 2338)).